A 141-amino-acid polypeptide reads, in one-letter code: Venom protein family 1 protein 1 (141 aa).

The N-terminal stretch at 1-17 (MKSFIVVLCCLFAITYG) is a signal peptide. C62 and C139 are disulfide-bonded.

This sequence belongs to the insect vpf1 family. Expressed by the venom gland (posterior main gland) (at protein level).

The protein resides in the secreted. In Platymeris rhadamanthus (Red spot assassin bug), this protein is Venom protein family 1 protein 1.